We begin with the raw amino-acid sequence, 342 residues long: S-adenosylmethionine:tRNA ribosyltransferase-isomerase (342 aa).

It belongs to the QueA family. As to quaternary structure, monomer.

It is found in the cytoplasm. It carries out the reaction 7-aminomethyl-7-carbaguanosine(34) in tRNA + S-adenosyl-L-methionine = epoxyqueuosine(34) in tRNA + adenine + L-methionine + 2 H(+). The protein operates within tRNA modification; tRNA-queuosine biosynthesis. Transfers and isomerizes the ribose moiety from AdoMet to the 7-aminomethyl group of 7-deazaguanine (preQ1-tRNA) to give epoxyqueuosine (oQ-tRNA). The polypeptide is S-adenosylmethionine:tRNA ribosyltransferase-isomerase (Listeria monocytogenes serotype 4a (strain HCC23)).